The sequence spans 552 residues: Urocanate hydratase (552 aa).

NAD(+) is bound by residues Gly-49–Gly-50, Gln-127, Gly-173–Gly-175, Asp-193, Asn-239–Ala-240, Gln-260–His-264, Tyr-270–Ile-271, and Tyr-319. Cys-407 is a catalytic residue. Residue Gly-489 coordinates NAD(+).

Belongs to the urocanase family. NAD(+) serves as cofactor.

It is found in the cytoplasm. The catalysed reaction is 4-imidazolone-5-propanoate = trans-urocanate + H2O. It participates in amino-acid degradation; L-histidine degradation into L-glutamate; N-formimidoyl-L-glutamate from L-histidine: step 2/3. Its function is as follows. Catalyzes the conversion of urocanate to 4-imidazolone-5-propionate. The polypeptide is Urocanate hydratase (Bacillus cereus (strain 03BB102)).